The sequence spans 257 residues: Distal membrane-arm assembly complex protein 2 (257 aa).

Ser-253 carries the post-translational modification Phosphoserine.

Belongs to the ATP synthase subunit s family. As to quaternary structure, interacts with incompletely assembled mitochondrial NADH:ubiquinone oxidoreductase complex (complex I).

It is found in the mitochondrion. In terms of biological role, required for the assembly of the mitochondrial NADH:ubiquinone oxidoreductase complex (complex I). Involved in the assembly of the distal region of complex I. This Homo sapiens (Human) protein is Distal membrane-arm assembly complex protein 2.